We begin with the raw amino-acid sequence, 409 residues long: Phosphoglycerate kinase (409 aa).

Substrate is bound by residues 22–24, Arg37, 60–63, Arg122, and Arg164; these read DLN and HLSR. ATP contacts are provided by residues Lys215, Glu338, and 365 to 368; that span reads GGDS.

Belongs to the phosphoglycerate kinase family. Monomer.

It is found in the cytoplasm. It catalyses the reaction (2R)-3-phosphoglycerate + ATP = (2R)-3-phospho-glyceroyl phosphate + ADP. Its pathway is carbohydrate degradation; glycolysis; pyruvate from D-glyceraldehyde 3-phosphate: step 2/5. This Mycoplasma pneumoniae (strain ATCC 29342 / M129 / Subtype 1) (Mycoplasmoides pneumoniae) protein is Phosphoglycerate kinase (pgk).